The chain runs to 107 residues: UPF0060 membrane protein M446_5886 (107 aa).

The next 4 helical transmembrane spans lie at 4 to 24 (LLAY…IWAW), 31 to 51 (PLWL…LTRV), 59 to 79 (AYAA…WAAE), and 85 to 105 (RWDL…LLGP).

Belongs to the UPF0060 family.

It is found in the cell inner membrane. This chain is UPF0060 membrane protein M446_5886, found in Methylobacterium sp. (strain 4-46).